The chain runs to 273 residues: NH(3)-dependent NAD(+) synthetase (273 aa).

47-54 (GISGGQDS) is an ATP binding site. Residue Asp-53 coordinates Mg(2+). Deamido-NAD(+) is bound at residue Arg-139. ATP is bound at residue Thr-159. Glu-164 contacts Mg(2+). Residues Lys-172 and Asp-179 each contribute to the deamido-NAD(+) site. ATP-binding residues include Lys-188 and Thr-210. 259-260 (HK) provides a ligand contact to deamido-NAD(+).

It belongs to the NAD synthetase family. Homodimer.

It catalyses the reaction deamido-NAD(+) + NH4(+) + ATP = AMP + diphosphate + NAD(+) + H(+). The protein operates within cofactor biosynthesis; NAD(+) biosynthesis; NAD(+) from deamido-NAD(+) (ammonia route): step 1/1. In terms of biological role, catalyzes the ATP-dependent amidation of deamido-NAD to form NAD. Uses ammonia as a nitrogen source. The polypeptide is NH(3)-dependent NAD(+) synthetase (Staphylococcus aureus (strain MRSA252)).